We begin with the raw amino-acid sequence, 179 residues long: Pectinesterase inhibitor 5 (179 aa).

Positions 1-25 (MATMLINHMLFLTSLLIVVFPVANA) are cleaved as a signal peptide. 2 disulfide bridges follow: Cys35–Cys44 and Cys101–Cys141.

The protein belongs to the PMEI family. As to expression, expressed in seeds, buds, and mature flowers.

Its subcellular location is the secreted. The protein localises to the extracellular space. It localises to the apoplast. Functionally, pectin methylesterase (PME) inhibitor that targets PME from seeds and modulates PME activity and pectin methylesterification during seed germination. The chain is Pectinesterase inhibitor 5 from Arabidopsis thaliana (Mouse-ear cress).